A 440-amino-acid polypeptide reads, in one-letter code: Adenylosuccinate synthetase (440 aa).

GTP is bound by residues 11–17 (GDEGKGG) and 39–41 (GHT). Catalysis depends on aspartate 12, which acts as the Proton acceptor. Mg(2+) is bound by residues aspartate 12 and glycine 39. Residues 12–15 (DEGK), 37–40 (NAGH), threonine 127, arginine 141, glutamine 230, threonine 245, and arginine 311 contribute to the IMP site. Histidine 40 functions as the Proton donor in the catalytic mechanism. 307–313 (TVTGRPR) serves as a coordination point for substrate. GTP contacts are provided by residues arginine 313, 339-341 (HLD), and 424-426 (GVG).

The protein belongs to the adenylosuccinate synthetase family. As to quaternary structure, homodimer. The cofactor is Mg(2+).

The protein resides in the cytoplasm. The enzyme catalyses IMP + L-aspartate + GTP = N(6)-(1,2-dicarboxyethyl)-AMP + GDP + phosphate + 2 H(+). Its pathway is purine metabolism; AMP biosynthesis via de novo pathway; AMP from IMP: step 1/2. Its function is as follows. Plays an important role in the de novo pathway of purine nucleotide biosynthesis. Catalyzes the first committed step in the biosynthesis of AMP from IMP. This is Adenylosuccinate synthetase from Halobacterium salinarum (strain ATCC 29341 / DSM 671 / R1).